A 302-amino-acid polypeptide reads, in one-letter code: Sulfate adenylyltransferase subunit 2 (302 aa).

It belongs to the PAPS reductase family. CysD subfamily. Heterodimer composed of CysD, the smaller subunit, and CysN.

It carries out the reaction sulfate + ATP + H(+) = adenosine 5'-phosphosulfate + diphosphate. It participates in sulfur metabolism; hydrogen sulfide biosynthesis; sulfite from sulfate: step 1/3. In terms of biological role, with CysN forms the ATP sulfurylase (ATPS) that catalyzes the adenylation of sulfate producing adenosine 5'-phosphosulfate (APS) and diphosphate, the first enzymatic step in sulfur assimilation pathway. APS synthesis involves the formation of a high-energy phosphoric-sulfuric acid anhydride bond driven by GTP hydrolysis by CysN coupled to ATP hydrolysis by CysD. The protein is Sulfate adenylyltransferase subunit 2 of Salmonella arizonae (strain ATCC BAA-731 / CDC346-86 / RSK2980).